The primary structure comprises 204 residues: Methylthioribulose-1-phosphate dehydratase (204 aa).

Zn(2+) contacts are provided by histidine 94 and histidine 96.

This sequence belongs to the aldolase class II family. MtnB subfamily. Zn(2+) serves as cofactor.

The enzyme catalyses 5-(methylsulfanyl)-D-ribulose 1-phosphate = 5-methylsulfanyl-2,3-dioxopentyl phosphate + H2O. It functions in the pathway amino-acid biosynthesis; L-methionine biosynthesis via salvage pathway; L-methionine from S-methyl-5-thio-alpha-D-ribose 1-phosphate: step 2/6. Its function is as follows. Catalyzes the dehydration of methylthioribulose-1-phosphate (MTRu-1-P) into 2,3-diketo-5-methylthiopentyl-1-phosphate (DK-MTP-1-P). In Citrobacter koseri (strain ATCC BAA-895 / CDC 4225-83 / SGSC4696), this protein is Methylthioribulose-1-phosphate dehydratase.